Consider the following 267-residue polypeptide: Farnesyl diphosphate phosphatase YisP (267 aa).

It belongs to the phytoene/squalene synthase family. Monomer.

The enzyme catalyses (2E,6E)-farnesyl diphosphate + H2O = (2E,6E)-farnesol + diphosphate. Its activity is regulated as follows. Diphosphate release from FPP is inhibited by zaragozic acid. Its function is as follows. A farnesyl diphosphate (FPP) phosphatase. Involved in biofilm formation, its disruption blocks biofilm synthesis which is restored by exogenous farnesol. Releases diphosphate from FPP, was initally suggested to be a squalene synthase. Diphosphate release is higher from FPP than geranyl pyrophosphate (GPP) or geranylgeranyl pyrophosphate (GGPP). Biofilm synthesis is partially restored by exogenous squalene, beta-carotene or retinol. Required for integrity of cell membrane lipid rafts. Involved in spatial organization of membranes, required for the flotillin-like proteins FloT and FloA to function correctly. The chain is Farnesyl diphosphate phosphatase YisP (yisP) from Bacillus subtilis (strain 168).